A 415-amino-acid chain; its full sequence is Peptide chain release factor subunit 1 (415 aa).

It belongs to the eukaryotic release factor 1 family. Heterodimer of two subunits, one of which binds GTP.

The protein resides in the cytoplasm. Its function is as follows. Directs the termination of nascent peptide synthesis (translation) in response to the termination codons UAA, UAG and UGA. This Methanosarcina mazei (strain ATCC BAA-159 / DSM 3647 / Goe1 / Go1 / JCM 11833 / OCM 88) (Methanosarcina frisia) protein is Peptide chain release factor subunit 1.